Here is a 515-residue protein sequence, read N- to C-terminus: Bifunctional purine biosynthesis protein PurH (515 aa).

The MGS-like domain maps to 1-145 (MTKRALISVS…KNHASVTVVV (145 aa)).

It belongs to the PurH family.

It catalyses the reaction (6R)-10-formyltetrahydrofolate + 5-amino-1-(5-phospho-beta-D-ribosyl)imidazole-4-carboxamide = 5-formamido-1-(5-phospho-D-ribosyl)imidazole-4-carboxamide + (6S)-5,6,7,8-tetrahydrofolate. It carries out the reaction IMP + H2O = 5-formamido-1-(5-phospho-D-ribosyl)imidazole-4-carboxamide. It functions in the pathway purine metabolism; IMP biosynthesis via de novo pathway; 5-formamido-1-(5-phospho-D-ribosyl)imidazole-4-carboxamide from 5-amino-1-(5-phospho-D-ribosyl)imidazole-4-carboxamide (10-formyl THF route): step 1/1. It participates in purine metabolism; IMP biosynthesis via de novo pathway; IMP from 5-formamido-1-(5-phospho-D-ribosyl)imidazole-4-carboxamide: step 1/1. The chain is Bifunctional purine biosynthesis protein PurH from Streptococcus uberis (strain ATCC BAA-854 / 0140J).